The primary structure comprises 47 residues: Large ribosomal subunit protein bL34 (47 aa).

It belongs to the bacterial ribosomal protein bL34 family.

This chain is Large ribosomal subunit protein bL34, found in Mycobacterium ulcerans (strain Agy99).